Reading from the N-terminus, the 234-residue chain is Adenosine 5'-phosphosulfate reductase (234 aa).

Residues cysteine 120, cysteine 121, cysteine 203, and cysteine 206 each contribute to the [4Fe-4S] cluster site. Cysteine 229 acts as the Nucleophile; cysteine thiosulfonate intermediate in catalysis.

Belongs to the PAPS reductase family. CysH subfamily. It depends on [4Fe-4S] cluster as a cofactor.

It is found in the cytoplasm. The catalysed reaction is [thioredoxin]-disulfide + sulfite + AMP + 2 H(+) = adenosine 5'-phosphosulfate + [thioredoxin]-dithiol. The protein operates within sulfur metabolism; hydrogen sulfide biosynthesis; sulfite from sulfate. Functionally, catalyzes the formation of sulfite from adenosine 5'-phosphosulfate (APS) using thioredoxin as an electron donor. This is Adenosine 5'-phosphosulfate reductase from Bacillus cereus (strain 03BB102).